A 618-amino-acid polypeptide reads, in one-letter code: MKQSKLLIPTLREMPSDAQVISHALMVRAGYVRQVSAGIYAYLPLANRTIEKFKTIMREEFEKIGAVEMLAPALLTADLWRESGRYETYGEDLYKLKNRDNSDFILGPTHEETFTTLVRDAVKSYKQLPLNLYQIQSKYRDEKRPRNGLLRTREFIMKDGYSFHHNYEDLDVTYEDYRQAYEAIFTRAGLDFKGIIGDGGAMGGKDSQEFMAITPARTDLDRWVVLDKSIASMDDIPKEVLEEIKAELAAWMISGEDTIAYSTESSYAANLEMATNEYKPSSKVAAEDALAEVETPHCKTIDEVAAFLSVDETQTIKTLLFVADNEPVVALLVGNDHINTVKLKNYLAADFLEPASEEEARAFFGAGFGSLGPVNLAQGSRIVADRKVQNLTNAVAGANKDGFHVTGVNPGRDFQAEYVDIREVKEGEMSPDGHGVLQFARGIEVGHIFKLGTRYSDSMGAKILDENGRAVPIVMGCYGIGVSRILSAVIEQHARLFVNKTPKGDYRYAWGINFPKELAPFDVHLITVNVKDQAAQDLTAKLEADLMAKGYDVLTDDRNERVGSKFSDSDLIGLPIRVTVGKKAAEGIVEIKIKATGDSIEVNAENLIETLEILTKEH.

This sequence belongs to the class-II aminoacyl-tRNA synthetase family. ProS type 1 subfamily. Homodimer.

The protein localises to the cytoplasm. It carries out the reaction tRNA(Pro) + L-proline + ATP = L-prolyl-tRNA(Pro) + AMP + diphosphate. Functionally, catalyzes the attachment of proline to tRNA(Pro) in a two-step reaction: proline is first activated by ATP to form Pro-AMP and then transferred to the acceptor end of tRNA(Pro). As ProRS can inadvertently accommodate and process non-cognate amino acids such as alanine and cysteine, to avoid such errors it has two additional distinct editing activities against alanine. One activity is designated as 'pretransfer' editing and involves the tRNA(Pro)-independent hydrolysis of activated Ala-AMP. The other activity is designated 'posttransfer' editing and involves deacylation of mischarged Ala-tRNA(Pro). The misacylated Cys-tRNA(Pro) is not edited by ProRS. This Streptococcus pyogenes serotype M5 (strain Manfredo) protein is Proline--tRNA ligase.